The sequence spans 253 residues: ER membrane protein complex subunit 3 (253 aa).

A run of 3 helical transmembrane segments spans residues 10–30 (WVLL…QYIM), 126–146 (FIPQ…FILM), and 176–196 (SISW…LIGL).

This sequence belongs to the EMC3 family. In terms of assembly, component of the ER membrane protein complex (EMC), which is composed of EMC1, EMC2, EMC3, EMC4, EMC5 and EMC6.

It localises to the endoplasmic reticulum membrane. In terms of biological role, the EMC seems to be required for efficient folding of proteins in the endoplasmic reticulum (ER). This Saccharomyces cerevisiae (strain YJM789) (Baker's yeast) protein is ER membrane protein complex subunit 3 (AIM27).